Here is a 459-residue protein sequence, read N- to C-terminus: Mitochondrial distribution and morphology protein 34 (459 aa).

The SMP-LTD domain maps to 1–190 (MSFRFNEAVF…LPSLIFNTSQ (190 aa)). Positions 338–347 (RSNSNDDNAK) are enriched in basic and acidic residues. The segment at 338–375 (RSNSNDDNAKPRRRKIKCKKTRTPSNLQSQGEQAVDDS) is disordered. The segment covering 348–359 (PRRRKIKCKKTR) has biased composition (basic residues).

This sequence belongs to the MDM34 family. As to quaternary structure, component of the ER-mitochondria encounter structure (ERMES) or MDM complex, composed of MMM1, MDM10, MDM12 and MDM34. Ubiquitinated by a SCF (SKP1-CUL1-F-box protein) E3 ubiquitin-protein ligase complex containing the F-box protein MDM30. Ubiquitination is important for mitochondrial integrity.

The protein localises to the mitochondrion outer membrane. In terms of biological role, component of the ERMES/MDM complex, which serves as a molecular tether to connect the endoplasmic reticulum (ER) and mitochondria. Components of this complex are involved in the control of mitochondrial shape and protein biogenesis, and function in nonvesicular lipid trafficking between the ER and mitochondria. MDM34 is required for the interaction of the ER-resident membrane protein MMM1 and the outer mitochondrial membrane-resident beta-barrel protein MDM10. In Saccharomyces cerevisiae (strain AWRI1631) (Baker's yeast), this protein is Mitochondrial distribution and morphology protein 34.